A 121-amino-acid polypeptide reads, in one-letter code: Type II secretion system protein I (121 aa).

A propeptide spans methionine 1–glycine 6 (leader sequence). Position 7 is an N-methylmethionine (methionine 7). A helical transmembrane segment spans residues methionine 7–leucine 27.

This sequence belongs to the GSP I family. Type II secretion is composed of four main components: the outer membrane complex, the inner membrane complex, the cytoplasmic secretion ATPase and the periplasm-spanning pseudopilus. Interacts with core component PulG. Interacts with pseudopilins PulJ and PulK. In terms of processing, cleaved by prepilin peptidase. Post-translationally, methylated by prepilin peptidase at the amino group of the N-terminal methionine once the leader sequence is cleaved by prepilin peptidase.

It is found in the cell inner membrane. In terms of biological role, component of the type II secretion system required for the energy-dependent secretion of extracellular factors such as proteases and toxins from the periplasm. Part of the pseudopilus tip complex that is critical for the recognition and binding of secretion substrates. The polypeptide is Type II secretion system protein I (pulI) (Klebsiella michiganensis (strain ATCC 8724 / DSM 4798 / JCM 20051 / NBRC 3318 / NRRL B-199 / KCTC 1686 / BUCSAV 143 / CCM 1901)).